The chain runs to 717 residues: Epithelial splicing regulatory protein 2 (717 aa).

Positions 1 to 14 are enriched in pro residues; it reads MTPPPPPPPPPGPD. The segment at 1 to 23 is disordered; sequence MTPPPPPPPPPGPDPAVDSATDP. A Phosphoserine modification is found at S83. 3 RRM domains span residues 247 to 343, 348 to 428, and 465 to 545; these read TVVR…RFLS, VILR…RSTA, and DCVR…PCST. S563 is subject to Phosphoserine.

The protein belongs to the ESRP family. As to quaternary structure, interacts with RBPMS. Epithelial cell-specific.

It is found in the nucleus. Its function is as follows. mRNA splicing factor that regulates the formation of epithelial cell-specific isoforms. Specifically regulates the expression of FGFR2-IIIb, an epithelial cell-specific isoform of FGFR2. Also regulates the splicing of CD44, CTNND1, ENAH, 3 transcripts that undergo changes in splicing during the epithelial-to-mesenchymal transition (EMT). Acts by directly binding specific sequences in mRNAs. Binds the GU-rich sequence motifs in the ISE/ISS-3, a cis-element regulatory region present in the mRNA of FGFR2. The sequence is that of Epithelial splicing regulatory protein 2 (Esrp2) from Mus musculus (Mouse).